The primary structure comprises 207 residues: 2,3-bisphosphoglycerate-dependent phosphoglycerate mutase (207 aa).

Substrate contacts are provided by residues 10-17 (RHGQSEWN), 23-24 (TG), R62, 89-92 (ERDY), K100, 116-117 (RR), and 160-161 (GN). H11 (tele-phosphohistidine intermediate) is an active-site residue. E89 functions as the Proton donor/acceptor in the catalytic mechanism.

This sequence belongs to the phosphoglycerate mutase family. BPG-dependent PGAM subfamily. As to quaternary structure, homodimer.

It carries out the reaction (2R)-2-phosphoglycerate = (2R)-3-phosphoglycerate. It functions in the pathway carbohydrate degradation; glycolysis; pyruvate from D-glyceraldehyde 3-phosphate: step 3/5. Its function is as follows. Catalyzes the interconversion of 2-phosphoglycerate and 3-phosphoglycerate. The polypeptide is 2,3-bisphosphoglycerate-dependent phosphoglycerate mutase (Rhodopseudomonas palustris (strain BisB18)).